The chain runs to 173 residues: RNA 2',3'-cyclic phosphodiesterase (173 aa).

The active-site Proton donor is His-38. 2 short sequence motifs (HXTX) span residues His-38–Val-41 and His-118–Ile-121. His-118 acts as the Proton acceptor in catalysis.

It belongs to the 2H phosphoesterase superfamily. ThpR family.

It catalyses the reaction a 3'-end 2',3'-cyclophospho-ribonucleotide-RNA + H2O = a 3'-end 2'-phospho-ribonucleotide-RNA + H(+). In terms of biological role, hydrolyzes RNA 2',3'-cyclic phosphodiester to an RNA 2'-phosphomonoester. The sequence is that of RNA 2',3'-cyclic phosphodiesterase from Methanocaldococcus jannaschii (strain ATCC 43067 / DSM 2661 / JAL-1 / JCM 10045 / NBRC 100440) (Methanococcus jannaschii).